Consider the following 106-residue polypeptide: Prothymosin alpha-B (106 aa).

Positions 1–39 are enriched in basic and acidic residues; the sequence is MADAKVDSATEISAKDLKEKKLIEEKENGKDATNGKENE. The interval 1-106 is disordered; sequence MADAKVDSAT…DVDPKKQKVN (106 aa). A Phosphoserine modification is found at serine 8. At threonine 10 the chain carries Phosphothreonine. Acidic residues-rich tracts occupy residues 40–76 and 85–98; these read ENGEPEIDDEDDDEVDEDDEEGEGDEDEDEDDDDEDL and DDDEDEDEDDEDDV.

Belongs to the pro/parathymosin family. Uniformly expressed in all embryonic cells at 4 and 8 hpf. At the 20-somite stage (18 hpf), ubiquitously expressed in the developing nervous system, in the tail bud and in the pronephric ducts. Also expressed in some placodes, including the anterior lateral line placode, otic vesicle and olfactory placode. At 27 hpf, strong expression persists in the central nervous system and the olfactory placode. Expressed strongly in the eyes and the pectoral fin buds. In the tail region, expressed in the spinal cord, in the posterior lateral line precursors, and persists in the pronephric ducts. At 48 hpf, expressed in all head territories including the developing brain, eyes, and pharyngeal arches. More caudally, expression persists in the pectoral fin buds, the spinal cord and, for the first time, appears in the intestine. At 72 hpf, expressed only in restricted regions of the brain, in pharyngeal arches region and in the amacrine cells and the horizontal cells of the retina.

Its subcellular location is the nucleus. The chain is Prothymosin alpha-B from Danio rerio (Zebrafish).